The following is a 2998-amino-acid chain: Probable polyketide synthase 14 (2998 aa).

A Ketosynthase family 3 (KS3) domain is found at 19–456 (EDDIAIIGIG…GSNCCLILSE (438 aa)). Catalysis depends on for beta-ketoacyl synthase activity residues Cys-189, His-331, and His-376. The interval 657 to 690 (GIEASFIVGHSLGEIPAAYCSGMITLDTLCYLIY) is acyl/malonyl transferase. Ser-667 (for acyl/malonyl transferase activity) is an active-site residue. The segment at 962–1084 (IDQLGFSLIE…GNFQLFTSGN (123 aa)) is N-terminal hotdog fold. Positions 962–1249 (IDQLGFSLIE…CKSLTIIKDS (288 aa)) constitute a PKS/mFAS DH domain. The Proton acceptor; for dehydratase activity role is filled by His-996. Residues 1101-1249 (NLTKLTKNEL…CKSLTIIKDS (149 aa)) are C-terminal hotdog fold. Asp-1159 serves as the catalytic Proton donor; for dehydratase activity. Residues 1979-1999 (SILIHSGSGGIGLSALNILKW) traverse the membrane as a helical segment. The Carrier domain occupies 2476 to 2553 (ENDTSIDSLF…SSIKLITNQL (78 aa)). O-(pantetheine 4'-phosphoryl)serine is present on Ser-2513. Residues 2559–2578 (DGQQQQHRQNKKNNNIPENK) form a disordered region. The span at 2561–2573 (QQQQHRQNKKNNN) shows a compositional bias: low complexity. The chain crosses the membrane as a helical span at residues 2621-2641 (IFLTGSTGFLGAYLLWYLIQM).

Pantetheine 4'-phosphate is required as a cofactor.

The protein localises to the membrane. Its function is as follows. Probable polyketide synthase. The polypeptide is Probable polyketide synthase 14 (pks14) (Dictyostelium discoideum (Social amoeba)).